Consider the following 89-residue polypeptide: Large ribosomal subunit protein bL27 (89 aa).

Residues 1-20 form a disordered region; it reads MAHKKAGGSSRNGRDSAGRR.

The protein belongs to the bacterial ribosomal protein bL27 family.

The chain is Large ribosomal subunit protein bL27 from Zymomonas mobilis subsp. mobilis (strain ATCC 31821 / ZM4 / CP4).